A 439-amino-acid polypeptide reads, in one-letter code: GTPase Obg (439 aa).

In terms of domain architecture, Obg spans Thr5–Leu164. Residues Ala165–Arg335 form the OBG-type G domain. Residues Gly171–Ser178, Phe196–Thr200, Asp217–Gly220, Asn287–Asp290, and Ser316–Ala318 each bind GTP. Mg(2+) is bound by residues Ser178 and Thr198. Positions Asp337–Val359 are disordered. Residues Leu356–Asp433 form the OCT domain.

This sequence belongs to the TRAFAC class OBG-HflX-like GTPase superfamily. OBG GTPase family. Monomer. It depends on Mg(2+) as a cofactor.

It is found in the cytoplasm. In terms of biological role, an essential GTPase which binds GTP, GDP and possibly (p)ppGpp with moderate affinity, with high nucleotide exchange rates and a fairly low GTP hydrolysis rate. Plays a role in control of the cell cycle, stress response, ribosome biogenesis and in those bacteria that undergo differentiation, in morphogenesis control. This is GTPase Obg from Chloroflexus aggregans (strain MD-66 / DSM 9485).